Consider the following 248-residue polypeptide: Ubiquinone biosynthesis O-methyltransferase (248 aa).

S-adenosyl-L-methionine contacts are provided by Arg40, Gly71, Asp92, and Met135.

It belongs to the methyltransferase superfamily. UbiG/COQ3 family.

The enzyme catalyses a 3-demethylubiquinol + S-adenosyl-L-methionine = a ubiquinol + S-adenosyl-L-homocysteine + H(+). It catalyses the reaction a 3-(all-trans-polyprenyl)benzene-1,2-diol + S-adenosyl-L-methionine = a 2-methoxy-6-(all-trans-polyprenyl)phenol + S-adenosyl-L-homocysteine + H(+). It functions in the pathway cofactor biosynthesis; ubiquinone biosynthesis. Functionally, O-methyltransferase that catalyzes the 2 O-methylation steps in the ubiquinone biosynthetic pathway. The chain is Ubiquinone biosynthesis O-methyltransferase from Roseobacter denitrificans (strain ATCC 33942 / OCh 114) (Erythrobacter sp. (strain OCh 114)).